A 432-amino-acid polypeptide reads, in one-letter code: Adenylosuccinate synthetase (432 aa).

GTP contacts are provided by residues 12–18 and 40–42; these read GDEGKGK and GHT. Catalysis depends on D13, which acts as the Proton acceptor. Mg(2+)-binding residues include D13 and G40. Residues 13–16, 38–41, T132, R146, Q226, T241, and R305 contribute to the IMP site; these read DEGK and NAGH. H41 serves as the catalytic Proton donor. 301-307 provides a ligand contact to substrate; that stretch reads TVTGRKR. GTP is bound by residues R307, 333–335, and 415–417; these read KLD and STS.

This sequence belongs to the adenylosuccinate synthetase family. In terms of assembly, homodimer. Requires Mg(2+) as cofactor.

It is found in the cytoplasm. It catalyses the reaction IMP + L-aspartate + GTP = N(6)-(1,2-dicarboxyethyl)-AMP + GDP + phosphate + 2 H(+). It functions in the pathway purine metabolism; AMP biosynthesis via de novo pathway; AMP from IMP: step 1/2. Plays an important role in the de novo pathway of purine nucleotide biosynthesis. Catalyzes the first committed step in the biosynthesis of AMP from IMP. The polypeptide is Adenylosuccinate synthetase (Chelativorans sp. (strain BNC1)).